A 1214-amino-acid polypeptide reads, in one-letter code: [F-actin]-monooxygenase mical1 (1214 aa).

The monooxygenase domain stretch occupies residues 1–488; it reads MVNPLDSVNP…KRLYEAEEQE (488 aa). Residues C96, 115–117, 122–124, F182, Y292, and D392 each bind FAD; these read EKR and RNN. The disordered stretch occupies residues 484 to 505; that stretch reads AEEQESKPNKLKKPDIKAKPRK. Residues 508-614 form the Calponin-homology (CH) domain; sequence MKRLEELLSW…YLTQIRNALT (107 aa). The segment at 649–676 is disordered; that stretch reads HKDRLASVKGPRQQNMKEKEEKKDVKEE. Residues 663–676 show a composition bias toward basic and acidic residues; it reads NMKEKEEKKDVKEE. An LIM zinc-binding domain is found at 686 to 748; the sequence is EPCYFCKKHL…ELHSLAEEEE (63 aa). Residues C688, C691, H709, C712, C715, C718, C738, and H741 each coordinate Zn(2+). A disordered region spans residues 747 to 1019; that stretch reads EEGDEGHGGA…DDEDEDEEDL (273 aa). The segment covering 796-815 has biased composition (acidic residues); the sequence is PDFDESTEFPAPDQDEPPDL. Residues 828-841 are compositionally biased toward polar residues; that stretch reads SAENTNMENQQHNI. A compositionally biased stretch (low complexity) spans 910-922; it reads RGSSSAASTSSSS. A compositionally biased stretch (polar residues) spans 974-987; the sequence is SPWNLSSPRLQQRF. Acidic residues predominate over residues 1003-1019; the sequence is VSEDDNEDDEDEDEEDL. The region spanning 1053 to 1199 is the bMERB domain; it reads KMTEIQRFHK…EVNDQFNSSL (147 aa). A coiled-coil region spans residues 1061–1131; the sequence is HKAQSIQRRL…DLMVASRQLE (71 aa). The segment at 1194–1214 is disordered; that stretch reads QFNSSLDAKRRSTTASQVHWE.

This sequence belongs to the Mical family. The cofactor is FAD.

The protein resides in the cytoplasm. It localises to the cytoskeleton. Its subcellular location is the midbody. It is found in the endosome membrane. The catalysed reaction is L-methionyl-[F-actin] + NADPH + O2 + H(+) = L-methionyl-(R)-S-oxide-[F-actin] + NADP(+) + H2O. It catalyses the reaction NADPH + O2 + H(+) = H2O2 + NADP(+). Its function is as follows. Monooxygenase that promotes depolymerization of F-actin by mediating oxidation of specific methionine residues on actin to form methionine-sulfoxide, resulting in actin filament disassembly and prevent repolymerization. May be involved in endosomal tubule extension and neosynthesized protein export. This chain is [F-actin]-monooxygenase mical1 (mical1), found in Danio rerio (Zebrafish).